Here is a 108-residue protein sequence, read N- to C-terminus: Large ribosomal subunit protein bL21 (108 aa).

This sequence belongs to the bacterial ribosomal protein bL21 family. Part of the 50S ribosomal subunit. Contacts protein L20.

Functionally, this protein binds to 23S rRNA in the presence of protein L20. This is Large ribosomal subunit protein bL21 from Acidobacterium capsulatum (strain ATCC 51196 / DSM 11244 / BCRC 80197 / JCM 7670 / NBRC 15755 / NCIMB 13165 / 161).